The primary structure comprises 175 residues: MMYIVFIMSVLYVVGFIGFSSKPSPVYGGMSLIVSGGLGCGIIMSSGGSFLGLVVFLVYLGGMMVVFGYTIAMATEEYPETWGSNVVVLSAFLVGLLMEIFMIVWLFSGEHELVGFYFGGLEDLVVLGEGSFGYVREDYSGGASLYSYGFWFLAMAGWMLFVSIFIAIEVTRKRY.

6 helical membrane-spanning segments follow: residues 1 to 21, 24 to 44, 51 to 71, 87 to 107, 113 to 133, and 148 to 168; these read MMYI…GFSS, SPVY…GIIM, LGLV…GYTI, VVLS…VWLF, LVGF…GSFG, and YGFW…FIAI.

It belongs to the complex I subunit 6 family. Core subunit of respiratory chain NADH dehydrogenase (Complex I) which is composed of 45 different subunits.

It localises to the mitochondrion inner membrane. It catalyses the reaction a ubiquinone + NADH + 5 H(+)(in) = a ubiquinol + NAD(+) + 4 H(+)(out). In terms of biological role, core subunit of the mitochondrial membrane respiratory chain NADH dehydrogenase (Complex I) which catalyzes electron transfer from NADH through the respiratory chain, using ubiquinone as an electron acceptor. Essential for the catalytic activity and assembly of complex I. The polypeptide is NADH-ubiquinone oxidoreductase chain 6 (MT-ND6) (Mammuthus primigenius (Siberian woolly mammoth)).